Reading from the N-terminus, the 472-residue chain is ATP-dependent rRNA helicase rrp3 (472 aa).

Residues M1–K52 form a disordered region. Residues A10–D19 show a composition bias toward basic and acidic residues. A compositionally biased stretch (polar residues) spans T20–Q31. Positions K52–A80 match the Q motif motif. A Helicase ATP-binding domain is found at I83–V254. A96 to T103 provides a ligand contact to ATP. Positions D202–D205 match the DEAD box motif. Residues Y282 to M426 enclose the Helicase C-terminal domain. Residues K444–G472 are disordered. The segment covering T452–R462 has biased composition (basic residues).

The protein belongs to the DEAD box helicase family. DDX47/RRP3 subfamily. In terms of assembly, interacts with the SSU processome.

The protein localises to the nucleus. The enzyme catalyses ATP + H2O = ADP + phosphate + H(+). Functionally, ATP-dependent rRNA helicase required for pre-ribosomal RNA processing. Involved in the maturation of the 35S-pre-rRNA and to its cleavage to mature 18S rRNA. The sequence is that of ATP-dependent rRNA helicase rrp3 from Aspergillus fumigatus (strain ATCC MYA-4609 / CBS 101355 / FGSC A1100 / Af293) (Neosartorya fumigata).